A 239-amino-acid polypeptide reads, in one-letter code: MKVSLFVTCLIDLFYTEVGKATVELLERLGCKVDFPEAQTCCGQPAYNSGYVKEAKEAMKQMMRAFADADYVVTPSGSCAAMLKEYPHIFHGDPEWEAEAKRLAAKTYELTQFLVDVLKVEDVGASLHGRATYHTSCHMTRLLGVKDAPLRLLEHVKGLELVPLPNAHQCCGFGGTFSVKMGPISEQMVDEKIGHIEEAEADYLIGADCGCLLNIGGRIARLGKPIRVMHIAEVLNARN.

The protein belongs to the LutA/YkgE family.

Functionally, is involved in L-lactate degradation and allows cells to grow with lactate as the sole carbon source. In Geobacillus kaustophilus (strain HTA426), this protein is Lactate utilization protein A.